A 358-amino-acid chain; its full sequence is Nuclear receptor subfamily 1 group I member 3 (358 aa).

Positions 18-93 (PRNCVVCGDR…VGMRKDMILS (76 aa)) form a DNA-binding region, nuclear receptor. The NR C4-type zinc finger occupies 21–41 (CVVCGDRATGYHFHALTCEGC). Position 48 is a phosphothreonine; by PKC (threonine 48). An NR C4-type zinc finger spans residues 57–81 (CPFAGRCEVSKAQRRHCPACRLQKC). The NR LBD domain occupies 119–358 (QQKELVQILL…MTPLLGEICS (240 aa)).

Belongs to the nuclear hormone receptor family. NR1 subfamily. As to quaternary structure, heterodimer of NR1I3 and RXR. Interacts with PSMC4. Interacts with ECT2. Directly interacts with DNAJC7; this complex may also include HSP90. Interacts with CRY1. Interacts with CRY2 in a ligand-dependent manner. In terms of processing, phosphorylated at Thr-48 by PKC, dephosphorylation of Thr-48 is required for nuclear translocation and activation. In terms of tissue distribution, predominantly expressed in liver.

It is found in the nucleus. The protein localises to the cytoplasm. It localises to the cytoskeleton. In terms of biological role, binds and transactivates the retinoic acid response elements that control expression of the retinoic acid receptor beta 2 and alcohol dehydrogenase 3 genes. Transactivates both the phenobarbital responsive element module of the human CYP2B6 gene and the CYP3A4 xenobiotic response element. This Mus musculus (Mouse) protein is Nuclear receptor subfamily 1 group I member 3 (Nr1i3).